A 479-amino-acid polypeptide reads, in one-letter code: Adenosylhomocysteinase (479 aa).

Substrate contacts are provided by threonine 65, aspartate 144, and glutamate 204. 205-207 contacts NAD(+); it reads TTT. 2 residues coordinate substrate: lysine 234 and aspartate 238. NAD(+)-binding positions include asparagine 239, 268 to 273, glutamate 291, asparagine 326, 347 to 349, and asparagine 392; these read GYGDVG and IGH.

The protein belongs to the adenosylhomocysteinase family. Requires NAD(+) as cofactor.

It is found in the cytoplasm. It catalyses the reaction S-adenosyl-L-homocysteine + H2O = L-homocysteine + adenosine. It functions in the pathway amino-acid biosynthesis; L-homocysteine biosynthesis; L-homocysteine from S-adenosyl-L-homocysteine: step 1/1. Functionally, may play a key role in the regulation of the intracellular concentration of adenosylhomocysteine. This Variovorax paradoxus (strain S110) protein is Adenosylhomocysteinase.